We begin with the raw amino-acid sequence, 883 residues long: Phosphoenolpyruvate carboxylase (883 aa).

Active-site residues include His-138 and Lys-546.

This sequence belongs to the PEPCase type 1 family. The cofactor is Mg(2+).

The enzyme catalyses oxaloacetate + phosphate = phosphoenolpyruvate + hydrogencarbonate. Forms oxaloacetate, a four-carbon dicarboxylic acid source for the tricarboxylic acid cycle. In Escherichia coli O7:K1 (strain IAI39 / ExPEC), this protein is Phosphoenolpyruvate carboxylase.